The chain runs to 106 residues: Cytochrome c3 (106 aa).

The heme c site is built by histidine 26, histidine 29, cysteine 34, cysteine 37, histidine 38, histidine 39, cysteine 50, cysteine 55, histidine 56, histidine 75, cysteine 82, cysteine 85, histidine 86, cysteine 98, cysteine 101, and histidine 102.

In terms of processing, binds 4 heme c groups per subunit.

Functionally, participates in sulfate respiration coupled with phosphorylation by transferring electrons from the enzyme dehydrogenase to ferredoxin. This Maridesulfovibrio salexigens (Desulfovibrio salexigens) protein is Cytochrome c3.